The following is a 359-amino-acid chain: Phosphate acyltransferase (359 aa).

Belongs to the PlsX family. In terms of assembly, homodimer. Probably interacts with PlsY.

It is found in the cytoplasm. It catalyses the reaction a fatty acyl-[ACP] + phosphate = an acyl phosphate + holo-[ACP]. It participates in lipid metabolism; phospholipid metabolism. In terms of biological role, catalyzes the reversible formation of acyl-phosphate (acyl-PO(4)) from acyl-[acyl-carrier-protein] (acyl-ACP). This enzyme utilizes acyl-ACP as fatty acyl donor, but not acyl-CoA. In Salmonella heidelberg (strain SL476), this protein is Phosphate acyltransferase.